The primary structure comprises 201 residues: Regulator of G-protein signaling 1 (201 aa).

The region spanning 75 to 191 (SLEKLLISED…LKSEIFLRLA (117 aa)) is the RGS domain.

It localises to the cell membrane. The protein localises to the cytoplasm. Its subcellular location is the cytosol. In terms of biological role, regulates G protein-coupled receptor signaling cascades, including signaling downstream of the N-formylpeptide chemoattractant receptors and leukotriene receptors. Inhibits B cell chemotaxis. Inhibits signal transduction by increasing the GTPase activity of G protein alpha subunits, thereby driving them into their inactive GDP-bound form. The polypeptide is Regulator of G-protein signaling 1 (rgs1) (Xenopus tropicalis (Western clawed frog)).